A 253-amino-acid chain; its full sequence is MADSGSDAPISNRPEEEVTVEKTPEMEAAAEEERLRYLEFVQQAAAQVLVLAAAAYAYAKQGAGPLRPGVDHVEGTVKAVVGPVYDRFHGVPLDLLKFLDRKVGESVQELDRRVPPVVKEAPGLARSAAAEVRQAGLVGTATGLAKSAIARAEPRARDLYTRYEPVAERKAAEAWAALNRLPLVPSVTRAVLPAAASLSARYNTAVADGAKRGSAVATYLPLVPTERLSRVFGYPLADAAASPAPEMQPIPSQ.

Positions 1 to 26 are disordered; it reads MADSGSDAPISNRPEEEVTVEKTPEM. The segment covering 13 to 26 has biased composition (basic and acidic residues); the sequence is RPEEEVTVEKTPEM.

Belongs to the REF/SRPP family.

The polypeptide is REF/SRPP-like protein OsI_017815 (Oryza sativa subsp. indica (Rice)).